The following is a 131-amino-acid chain: D-ribose pyranase (131 aa).

His-20 (proton donor) is an active-site residue. Substrate-binding positions include Asp-28, His-98, and 120 to 122 (YSN).

This sequence belongs to the RbsD / FucU family. RbsD subfamily. In terms of assembly, homodecamer.

The protein resides in the cytoplasm. The catalysed reaction is beta-D-ribopyranose = beta-D-ribofuranose. Its pathway is carbohydrate metabolism; D-ribose degradation; D-ribose 5-phosphate from beta-D-ribopyranose: step 1/2. Catalyzes the interconversion of beta-pyran and beta-furan forms of D-ribose. The polypeptide is D-ribose pyranase (Lactobacillus johnsonii (strain CNCM I-12250 / La1 / NCC 533)).